Reading from the N-terminus, the 203-residue chain is Holliday junction branch migration complex subunit RuvA (203 aa).

The domain I stretch occupies residues 1–64 (MFAYFRGRLT…EDAFLLYGFS (64 aa)). Positions 65-143 (SESERQLFRL…KMSPDGGKTI (79 aa)) are domain II. The tract at residues 144-150 (ASGSGGN) is flexible linker. Positions 151 to 203 (LALQIKDDALNALITLGFSKPAAQKAVTGILEGNPSLSVEEVVKSALVSIHNS) are domain III.

This sequence belongs to the RuvA family. In terms of assembly, homotetramer. Forms an RuvA(8)-RuvB(12)-Holliday junction (HJ) complex. HJ DNA is sandwiched between 2 RuvA tetramers; dsDNA enters through RuvA and exits via RuvB. An RuvB hexamer assembles on each DNA strand where it exits the tetramer. Each RuvB hexamer is contacted by two RuvA subunits (via domain III) on 2 adjacent RuvB subunits; this complex drives branch migration. In the full resolvosome a probable DNA-RuvA(4)-RuvB(12)-RuvC(2) complex forms which resolves the HJ.

It is found in the cytoplasm. Its function is as follows. The RuvA-RuvB-RuvC complex processes Holliday junction (HJ) DNA during genetic recombination and DNA repair, while the RuvA-RuvB complex plays an important role in the rescue of blocked DNA replication forks via replication fork reversal (RFR). RuvA specifically binds to HJ cruciform DNA, conferring on it an open structure. The RuvB hexamer acts as an ATP-dependent pump, pulling dsDNA into and through the RuvAB complex. HJ branch migration allows RuvC to scan DNA until it finds its consensus sequence, where it cleaves and resolves the cruciform DNA. The sequence is that of Holliday junction branch migration complex subunit RuvA from Chlorobium limicola (strain DSM 245 / NBRC 103803 / 6330).